Consider the following 78-residue polypeptide: Translation initiation factor IF-1 (78 aa).

Residues 2-78 form the S1-like domain; sequence SKNNLNETES…TRARITYRFK (77 aa).

Belongs to the IF-1 family. Component of the 30S ribosomal translation pre-initiation complex which assembles on the 30S ribosome in the order IF-2 and IF-3, IF-1 and N-formylmethionyl-tRNA(fMet); mRNA recruitment can occur at any time during PIC assembly.

It is found in the cytoplasm. Functionally, one of the essential components for the initiation of protein synthesis. Stabilizes the binding of IF-2 and IF-3 on the 30S subunit to which N-formylmethionyl-tRNA(fMet) subsequently binds. Helps modulate mRNA selection, yielding the 30S pre-initiation complex (PIC). Upon addition of the 50S ribosomal subunit IF-1, IF-2 and IF-3 are released leaving the mature 70S translation initiation complex. The protein is Translation initiation factor IF-1 of Onion yellows phytoplasma (strain OY-M).